The chain runs to 175 residues: Small ribosomal subunit protein uS5 (175 aa).

Residues 19 to 82 (WVDRLVSVNR…DDAKKNVIRV (64 aa)) form the S5 DRBM domain.

The protein belongs to the universal ribosomal protein uS5 family. As to quaternary structure, part of the 30S ribosomal subunit. Contacts proteins S4 and S8.

Its function is as follows. With S4 and S12 plays an important role in translational accuracy. Located at the back of the 30S subunit body where it stabilizes the conformation of the head with respect to the body. The polypeptide is Small ribosomal subunit protein uS5 (Salinibacter ruber (strain DSM 13855 / M31)).